A 142-amino-acid polypeptide reads, in one-letter code: MSLPKKKKPEVEEEEKPEEEEEKEEEQEIDINNLEWQNIATSNAFKVDIGDEIIFKPTSEPKQVKSGSAFVVDAYVYQWKSQNQVPQKGNATLYIQTVLGNAIIRAVQQYGLGNFVVHAKNKGRAKGKLYYDYEIKIAKVKQ.

A disordered region spans residues 1–31; that stretch reads MSLPKKKKPEVEEEEKPEEEEEKEEEQEIDI. The span at 11–29 shows a compositional bias: acidic residues; it reads VEEEEKPEEEEEKEEEQEI.

This is an uncharacterized protein from Acidianus sp. F28 (AFV-2).